The chain runs to 530 residues: uncharacterized protein (530 aa).

The next 5 membrane-spanning stretches (helical) occupy residues 4-23 (FLAANPLIALAVILAVGLAI), 28-47 (LFGVSLGAAAVLIVALVVST), 57-79 (FVFQLGLAMFVYVIGISAGPAFF), 91-113 (LFMITLLVSLTALAWVLIRAFGL), and 148-170 (VIGYSLAYPGAVLGSILVAAVGA). The region spanning 260–344 (LGGECDTKIE…MGEVRRFLGD (85 aa)) is the RCK C-terminal domain. The next 4 helical transmembrane spans lie at 352–374 (VNLLPFAIGLSLGLLLGAIPVPL), 379–398 (TMYLGFGGGPIVAGLILGAL), 419–441 (LGLALFLAGVGTSAGAGFRQALT), and 451–473 (VGFAITVTSALVCAVVGMWLLKL).

The protein belongs to the AAE transporter (TC 2.A.81) family.

It localises to the cell membrane. This is an uncharacterized protein from Corynebacterium efficiens (strain DSM 44549 / YS-314 / AJ 12310 / JCM 11189 / NBRC 100395).